A 319-amino-acid polypeptide reads, in one-letter code: Dehydrogenase/reductase SDR family member 9 (319 aa).

The signal sequence occupies residues 1–17 (MLFWVLGLLILCGFLWT). NAD(+) contacts are provided by residues 34–58 (ITGC…HVIA) and D83. S164 contributes to the substrate binding site. Residue Y176 is the Proton acceptor of the active site. K180 serves as a coordination point for NAD(+).

This sequence belongs to the short-chain dehydrogenases/reductases (SDR) family. Homotetramer. As to expression, highly expressed in trachea and epidermis. Detected at lower levels in spinal cord, bone marrow, brain, tongue, esophagus, heart, colon, testis, placenta, lung, skeletal muscle and lymph node.

It is found in the microsome membrane. Its subcellular location is the endoplasmic reticulum membrane. The catalysed reaction is 3beta-hydroxy-5alpha-pregnane-20-one + NAD(+) = 5alpha-pregnane-3,20-dione + NADH + H(+). The enzyme catalyses 17beta-hydroxy-5alpha-androstan-3-one + NAD(+) = 5alpha-androstan-3,17-dione + NADH + H(+). It carries out the reaction androsterone + NAD(+) = 5alpha-androstan-3,17-dione + NADH + H(+). It catalyses the reaction 5alpha-androstane-3alpha,17beta-diol + NAD(+) = 17beta-hydroxy-5alpha-androstan-3-one + NADH + H(+). The catalysed reaction is all-trans-retinol + NAD(+) = all-trans-retinal + NADH + H(+). The enzyme catalyses 3alpha-hydroxy-5alpha-pregnan-20-one + NAD(+) = 5alpha-pregnane-3,20-dione + NADH + H(+). Functionally, 3-alpha-hydroxysteroid dehydrogenase that converts 3-alpha-tetrahydroprogesterone (allopregnanolone) to dihydroxyprogesterone and 3-alpha-androstanediol to dihydroxyprogesterone. Also plays a role in the biosynthesis of retinoic acid from retinaldehyde. Can utilize both NADH and NADPH. This Homo sapiens (Human) protein is Dehydrogenase/reductase SDR family member 9 (DHRS9).